Consider the following 341-residue polypeptide: L-threonine 3-dehydrogenase (341 aa).

Cysteine 38 is a binding site for Zn(2+). Active-site charge relay system residues include threonine 40 and histidine 43. Positions 63, 64, 93, 96, 99, and 107 each coordinate Zn(2+). Residues isoleucine 175, aspartate 195, arginine 200, 262–264 (LGI), and 286–287 (IY) contribute to the NAD(+) site.

It belongs to the zinc-containing alcohol dehydrogenase family. Homotetramer. Zn(2+) serves as cofactor.

It localises to the cytoplasm. The catalysed reaction is L-threonine + NAD(+) = (2S)-2-amino-3-oxobutanoate + NADH + H(+). It participates in amino-acid degradation; L-threonine degradation via oxydo-reductase pathway; glycine from L-threonine: step 1/2. Catalyzes the NAD(+)-dependent oxidation of L-threonine to 2-amino-3-ketobutyrate. The polypeptide is L-threonine 3-dehydrogenase (Solibacter usitatus (strain Ellin6076)).